The sequence spans 366 residues: Bacteriochlorophyll a protein (366 aa).

5 residues coordinate bacteriochlorophyll a: His-110, His-145, His-290, His-297, and His-298.

Homotrimer. Each subunit contains 7 molecules of bacteriochlorophyll a.

Intermediary in the transfer of excitation energy from the chlorophyll to the reaction centers. The protein is Bacteriochlorophyll a protein of Prosthecochloris aestuarii.